Reading from the N-terminus, the 188-residue chain is Inosine triphosphate pyrophosphatase (188 aa).

12-17 (TGNANK) lines the ITP pocket. E40 provides a ligand contact to Mg(2+). ITP is bound by residues K52, 68–69 (DT), K85, 144–147 (FGWD), K165, and 170–171 (HR).

The protein belongs to the HAM1 NTPase family. As to quaternary structure, homodimer. Requires Mg(2+) as cofactor. Mn(2+) is required as a cofactor.

The protein resides in the cytoplasm. It is found in the nucleus. It catalyses the reaction ITP + H2O = IMP + diphosphate + H(+). It carries out the reaction dITP + H2O = dIMP + diphosphate + H(+). The enzyme catalyses XTP + H2O = XMP + diphosphate + H(+). Functionally, pyrophosphatase that hydrolyzes non-canonical purine nucleotides such as inosine triphosphate (ITP), deoxyinosine triphosphate (dITP) or xanthosine 5'-triphosphate (XTP) to their respective monophosphate derivatives. The enzyme does not distinguish between the deoxy- and ribose forms. Probably excludes non-canonical purines from RNA and DNA precursor pools, thus preventing their incorporation into RNA and DNA and avoiding chromosomal lesions. The protein is Inosine triphosphate pyrophosphatase of Podospora anserina (strain S / ATCC MYA-4624 / DSM 980 / FGSC 10383) (Pleurage anserina).